A 437-amino-acid polypeptide reads, in one-letter code: Histidinol dehydrogenase (437 aa).

NAD(+) is bound by residues Y137, Q199, and N222. 3 residues coordinate substrate: S245, Q267, and H270. Q267 and H270 together coordinate Zn(2+). Active-site proton acceptor residues include E335 and H336. H336, D369, E423, and H428 together coordinate substrate. D369 contacts Zn(2+). H428 is a binding site for Zn(2+).

It belongs to the histidinol dehydrogenase family. Zn(2+) serves as cofactor.

The enzyme catalyses L-histidinol + 2 NAD(+) + H2O = L-histidine + 2 NADH + 3 H(+). Its pathway is amino-acid biosynthesis; L-histidine biosynthesis; L-histidine from 5-phospho-alpha-D-ribose 1-diphosphate: step 9/9. In terms of biological role, catalyzes the sequential NAD-dependent oxidations of L-histidinol to L-histidinaldehyde and then to L-histidine. The chain is Histidinol dehydrogenase from Parasynechococcus marenigrum (strain WH8102).